Consider the following 286-residue polypeptide: ATP-binding protein ChvD (286 aa).

Positions 21-85 (KLQDMIDSQN…DLLLLDEPTN (65 aa)) constitute an ABC transporter domain.

The protein belongs to the ABC transporter superfamily.

In terms of biological role, the induction of virG by growth under acidic conditions and by phosphate starvation, in the absence of plant inducers, is influenced by ChvD. This is ATP-binding protein ChvD (chvD) from Rhizobium radiobacter (Agrobacterium tumefaciens).